Reading from the N-terminus, the 140-residue chain is Austinoid biosynthesis clusters protein S (140 aa).

The protein belongs to the trt14 isomerase family. Homodimer.

Its pathway is secondary metabolite biosynthesis; terpenoid biosynthesis. In terms of biological role, part of the gene cluster B that mediates the biosynthesis of austinol and dehydroaustinol, two fungal meroterpenoids. The first step of the pathway is the synthesis of 3,5-dimethylorsellinic acid by the polyketide synthase ausA. 3,5-dimethylorsellinic acid is then prenylated by the polyprenyl transferase ausN. Further epoxidation by the FAD-dependent monooxygenase ausM and cyclization by the probable terpene cyclase ausL lead to the formation of protoaustinoid A. Protoaustinoid A is then oxidized to spiro-lactone preaustinoid A3 by the combined action of the FAD-binding monooxygenases ausB and ausC, and the dioxygenase ausE. Acid-catalyzed keto-rearrangement and ring contraction of the tetraketide portion of preaustinoid A3 by ausJ lead to the formation of preaustinoid A4. The aldo-keto reductase ausK, with the help of ausH, is involved in the next step by transforming preaustinoid A4 into isoaustinone which is in turn hydroxylated by the P450 monooxygenase ausI to form austinolide. Finally, the cytochrome P450 monooxygenase ausG modifies austinolide to austinol. Austinol can be further modified to dehydroaustinol which forms a diffusible complex with diorcinol that initiates conidiation. Due to genetic rearrangements of the clusters and the subsequent loss of some enzymes, the end products of the Emericella nidulans austinoid biosynthesis clusters are austinol and dehydroaustinol, even if additional enzymes, such as the O-acetyltransferase ausQ and the cytochrome P450 monooxygenase ausR are still functional. AusS is necessary for austinoids production and may play a possible function as a regulator. The polypeptide is Austinoid biosynthesis clusters protein S (Emericella nidulans (strain FGSC A4 / ATCC 38163 / CBS 112.46 / NRRL 194 / M139) (Aspergillus nidulans)).